Here is a 253-residue protein sequence, read N- to C-terminus: Prepilin leader peptidase/N-methyltransferase (253 aa).

A helical transmembrane segment spans residues 4–24 (VYLILFSIVSLILGSFSNVVI). Zn(2+)-binding residues include C48, C51, C73, and C76. The next 6 helical transmembrane spans lie at 80–100 (ISLS…PIYW), 106–126 (VDSF…VIDF), 129–149 (MLLP…YVQQ), 159–179 (IIGG…VRLF), 198–218 (TLIG…IAFI), and 230–250 (CLYI…FFSI).

Belongs to the peptidase A24 family. Zn(2+) serves as cofactor.

Its subcellular location is the cell inner membrane. It carries out the reaction Typically cleaves a -Gly-|-Phe- bond to release an N-terminal, basic peptide of 5-8 residues from type IV prepilin, and then N-methylates the new N-terminal amino group, the methyl donor being S-adenosyl-L-methionine.. Its function is as follows. Plays an essential role in type IV pili and type II pseudopili formation by proteolytically removing the leader sequence from substrate proteins and subsequently monomethylating the alpha-amino group of the newly exposed N-terminal phenylalanine. This is Prepilin leader peptidase/N-methyltransferase (tcpJ) from Vibrio cholerae serotype O1 (strain ATCC 39315 / El Tor Inaba N16961).